Consider the following 100-residue polypeptide: Large ribosomal subunit protein uL23 (100 aa).

It belongs to the universal ribosomal protein uL23 family. In terms of assembly, part of the 50S ribosomal subunit. Contacts protein L29, and trigger factor when it is bound to the ribosome.

In terms of biological role, one of the early assembly proteins it binds 23S rRNA. One of the proteins that surrounds the polypeptide exit tunnel on the outside of the ribosome. Forms the main docking site for trigger factor binding to the ribosome. The chain is Large ribosomal subunit protein uL23 from Kosmotoga olearia (strain ATCC BAA-1733 / DSM 21960 / TBF 19.5.1).